We begin with the raw amino-acid sequence, 443 residues long: ATP-dependent protease ATPase subunit HslU (443 aa).

Residues Val18 and 60–65 each bind ATP; that span reads GVGKTE. Residues 139–160 form a disordered region; sequence AKNNWGQPEESGEPSSARQNFR. The ATP site is built by Asp256, Glu321, and Arg393.

Belongs to the ClpX chaperone family. HslU subfamily. As to quaternary structure, a double ring-shaped homohexamer of HslV is capped on each side by a ring-shaped HslU homohexamer. The assembly of the HslU/HslV complex is dependent on binding of ATP.

The protein resides in the cytoplasm. In terms of biological role, ATPase subunit of a proteasome-like degradation complex; this subunit has chaperone activity. The binding of ATP and its subsequent hydrolysis by HslU are essential for unfolding of protein substrates subsequently hydrolyzed by HslV. HslU recognizes the N-terminal part of its protein substrates and unfolds these before they are guided to HslV for hydrolysis. The chain is ATP-dependent protease ATPase subunit HslU from Sodalis glossinidius (strain morsitans).